A 172-amino-acid chain; its full sequence is Transcriptional repressor NrdR (172 aa).

Residues 3 to 34 (CPYCRNTDTRVLDSRVADDGGSIRRRRTCSAC) fold into a zinc finger. The region spanning 46 to 136 (LTVLKRSGAS…VYRAFESADD (91 aa)) is the ATP-cone domain.

The protein belongs to the NrdR family. It depends on Zn(2+) as a cofactor.

Functionally, negatively regulates transcription of bacterial ribonucleotide reductase nrd genes and operons by binding to NrdR-boxes. The protein is Transcriptional repressor NrdR of Nocardioides sp. (strain ATCC BAA-499 / JS614).